The chain runs to 157 residues: Endoribonuclease YbeY (157 aa).

The Zn(2+) site is built by histidine 113, histidine 117, and histidine 123.

The protein belongs to the endoribonuclease YbeY family. Requires Zn(2+) as cofactor.

The protein resides in the cytoplasm. Single strand-specific metallo-endoribonuclease involved in late-stage 70S ribosome quality control and in maturation of the 3' terminus of the 16S rRNA. The chain is Endoribonuclease YbeY from Ehrlichia ruminantium (strain Welgevonden).